Here is an 807-residue protein sequence, read N- to C-terminus: Sucrose synthase 2 (807 aa).

Positions M274 to T752 are GT-B glycosyltransferase.

Belongs to the glycosyltransferase 1 family. Plant sucrose synthase subfamily. Detected in the whole plant but at lower levels. Predominantly expressed in developing siliques. Also detected in the root tip. Detected in the embryo, endosperm and seed coat (at the protein level).

It localises to the cytoplasm. It is found in the plastid membrane. It catalyses the reaction an NDP-alpha-D-glucose + D-fructose = a ribonucleoside 5'-diphosphate + sucrose + H(+). In terms of biological role, sucrose-cleaving enzyme that provides UDP-glucose and fructose for various metabolic pathways. Modulates metabolic homeostasis and directs carbon towards starch synthesis in developing seeds. The sequence is that of Sucrose synthase 2 (SUS2) from Arabidopsis thaliana (Mouse-ear cress).